The primary structure comprises 78 residues: NAD(P)H-quinone oxidoreductase subunit L (78 aa).

Transmembrane regions (helical) follow at residues 10-30 and 48-68; these read LFVI…IPLG and LLIY…APFL.

It belongs to the complex I NdhL subunit family. NDH-1 can be composed of about 15 different subunits; different subcomplexes with different compositions have been identified which probably have different functions.

It localises to the cellular thylakoid membrane. The catalysed reaction is a plastoquinone + NADH + (n+1) H(+)(in) = a plastoquinol + NAD(+) + n H(+)(out). The enzyme catalyses a plastoquinone + NADPH + (n+1) H(+)(in) = a plastoquinol + NADP(+) + n H(+)(out). Its function is as follows. NDH-1 shuttles electrons from an unknown electron donor, via FMN and iron-sulfur (Fe-S) centers, to quinones in the respiratory and/or the photosynthetic chain. The immediate electron acceptor for the enzyme in this species is believed to be plastoquinone. Couples the redox reaction to proton translocation, and thus conserves the redox energy in a proton gradient. Cyanobacterial NDH-1 also plays a role in inorganic carbon-concentration. This is NAD(P)H-quinone oxidoreductase subunit L from Prochlorococcus marinus (strain SARG / CCMP1375 / SS120).